Here is a 210-residue protein sequence, read N- to C-terminus: Dephospho-CoA kinase (210 aa).

The DPCK domain maps to 18-210; that stretch reads RIGITGGIAS…LSYPQVEVLL (193 aa). Residue 26-31 coordinates ATP; it reads ASGKTS.

It belongs to the CoaE family.

It localises to the cytoplasm. It carries out the reaction 3'-dephospho-CoA + ATP = ADP + CoA + H(+). It participates in cofactor biosynthesis; coenzyme A biosynthesis; CoA from (R)-pantothenate: step 5/5. Catalyzes the phosphorylation of the 3'-hydroxyl group of dephosphocoenzyme A to form coenzyme A. This chain is Dephospho-CoA kinase, found in Prochlorococcus marinus (strain SARG / CCMP1375 / SS120).